The following is a 268-amino-acid chain: Tryptophan synthase alpha chain (268 aa).

Active-site proton acceptor residues include Glu-49 and Asp-60.

This sequence belongs to the TrpA family. As to quaternary structure, tetramer of two alpha and two beta chains.

It carries out the reaction (1S,2R)-1-C-(indol-3-yl)glycerol 3-phosphate + L-serine = D-glyceraldehyde 3-phosphate + L-tryptophan + H2O. It participates in amino-acid biosynthesis; L-tryptophan biosynthesis; L-tryptophan from chorismate: step 5/5. In terms of biological role, the alpha subunit is responsible for the aldol cleavage of indoleglycerol phosphate to indole and glyceraldehyde 3-phosphate. The polypeptide is Tryptophan synthase alpha chain (Xanthomonas euvesicatoria pv. vesicatoria (strain 85-10) (Xanthomonas campestris pv. vesicatoria)).